A 492-amino-acid polypeptide reads, in one-letter code: MYVLAIDQSTSGTKAIIFDEKGGIVHRVTVYHKQYYPKPGWVEHDPEEIFRNTLDACRKVIEESGIKPLEIEALAITNQRETTILWEKKSGKPVYNAVVWQCQRGASLCEEIKKRGLEGKIKEKTGLVVDPYFSASKIRWILDNVEGVKNKAKQGEIAFGTVDSWLIWKLTKGEVHATDFSNASRTLLLNIHELRWDEEVLEIFEIPPEILPELKSSDSVFGYTDLGFLPKKIPIVGVMGDSSAALFGQGGFYSGDIKVTYGTGSSTMLNIGEKPNVSDSPIVCSVGWVVKETSSYVLEGNIHSAGDTIVWLKEKLGIISDPSETEKIALSLENNGGVYLVPAFVGLGAPYWRSDVKAAILGLQRNHGKEHVVRAALESIAYQVRDIFEEMVRISSKEPTEVRADGGITRNRFLMQFQADILNIPVLVSNIEEVSARGVAFVALLHLGAFSDLEEIRQKITYREKYEPRMGDELREMYYEGWKTAIRKLLTE.

Thr-10 contacts ADP. Thr-10 and Ser-11 together coordinate ATP. Sn-glycerol 3-phosphate is bound at residue Thr-10. Lys-14 contributes to the ADP binding site. Sn-glycerol 3-phosphate contacts are provided by Arg-80, Glu-81, Tyr-132, and Asp-241. Arg-80, Glu-81, Tyr-132, and Asp-241 together coordinate glycerol. The ADP site is built by Thr-263, Gly-306, Gly-407, and Asn-411. Positions 263, 306, and 407 each coordinate ATP.

This sequence belongs to the FGGY kinase family.

It carries out the reaction glycerol + ATP = sn-glycerol 3-phosphate + ADP + H(+). It participates in polyol metabolism; glycerol degradation via glycerol kinase pathway; sn-glycerol 3-phosphate from glycerol: step 1/1. Its activity is regulated as follows. Inhibited by fructose 1,6-bisphosphate (FBP). Key enzyme in the regulation of glycerol uptake and metabolism. Catalyzes the phosphorylation of glycerol to yield sn-glycerol 3-phosphate. This chain is Glycerol kinase 1, found in Thermotoga maritima (strain ATCC 43589 / DSM 3109 / JCM 10099 / NBRC 100826 / MSB8).